Here is a 188-residue protein sequence, read N- to C-terminus: UPF0461 protein C5orf24 homolog (188 aa).

Ser37 carries the post-translational modification Phosphoserine. Residue Lys75 forms a Glycyl lysine isopeptide (Lys-Gly) (interchain with G-Cter in SUMO2) linkage. A compositionally biased stretch (basic residues) spans 80–92 (KKKNLNRSGKRGR). The segment at 80-141 (KKKNLNRSGK…AGYKVSPGRP (62 aa)) is disordered. Residues 94–107 (SGTTKSAGYRTSTG) are compositionally biased toward polar residues. Residues Ser121 and Ser180 each carry the phosphoserine modification. Residue Lys184 forms a Glycyl lysine isopeptide (Lys-Gly) (interchain with G-Cter in SUMO2) linkage.

This sequence belongs to the UPF0461 family.

This chain is UPF0461 protein C5orf24 homolog, found in Mus musculus (Mouse).